The sequence spans 251 residues: MKLGVSTSLFLDTDKNLSDALEILEERVKYVELGCDGNLNVMSDGNIELAQSYDLKYTLHCPITDLNLSSYRERIRKVSLDFVRDVLEVAIKVDAKLIVLHPGYCVFKYDYEKALNSLIKSLNDLNNIQEEFGVQITIENMPSYDMFMFRNPDKEIIENLGELKITLDIGHSFLNKNIENFLKISDKIAHIHIHDNNGEFDEHLCIGKGKINFNNFKKDLKKINAIKMIELQNKSIDDLDLCIDNLKEILR.

This sequence to M.jannaschii MJ1311.

This is an uncharacterized protein from Methanocaldococcus jannaschii (strain ATCC 43067 / DSM 2661 / JAL-1 / JCM 10045 / NBRC 100440) (Methanococcus jannaschii).